The primary structure comprises 364 residues: tRNA 2-selenouridine synthase (364 aa).

In terms of domain architecture, Rhodanese spans 14–137 (LLADTPLIDV…LRQTAIQATW (124 aa)). The active-site S-selanylcysteine intermediate is the Cys97.

Belongs to the SelU family. In terms of assembly, monomer.

The enzyme catalyses 5-methylaminomethyl-2-thiouridine(34) in tRNA + selenophosphate + (2E)-geranyl diphosphate + H2O + H(+) = 5-methylaminomethyl-2-selenouridine(34) in tRNA + (2E)-thiogeraniol + phosphate + diphosphate. It catalyses the reaction 5-methylaminomethyl-2-thiouridine(34) in tRNA + (2E)-geranyl diphosphate = 5-methylaminomethyl-S-(2E)-geranyl-thiouridine(34) in tRNA + diphosphate. The catalysed reaction is 5-methylaminomethyl-S-(2E)-geranyl-thiouridine(34) in tRNA + selenophosphate + H(+) = 5-methylaminomethyl-2-(Se-phospho)selenouridine(34) in tRNA + (2E)-thiogeraniol. It carries out the reaction 5-methylaminomethyl-2-(Se-phospho)selenouridine(34) in tRNA + H2O = 5-methylaminomethyl-2-selenouridine(34) in tRNA + phosphate. In terms of biological role, involved in the post-transcriptional modification of the uridine at the wobble position (U34) of tRNA(Lys), tRNA(Glu) and tRNA(Gln). Catalyzes the conversion of 2-thiouridine (S2U-RNA) to 2-selenouridine (Se2U-RNA). Acts in a two-step process involving geranylation of 2-thiouridine (S2U) to S-geranyl-2-thiouridine (geS2U) and subsequent selenation of the latter derivative to 2-selenouridine (Se2U) in the tRNA chain. This chain is tRNA 2-selenouridine synthase, found in Salmonella choleraesuis (strain SC-B67).